Consider the following 271-residue polypeptide: Phosphatidate cytidylyltransferase (271 aa).

The next 8 membrane-spanning stretches (helical) occupy residues 12–32 (LLPI…ALFI), 53–73 (FGRV…YHLP), 75–95 (LAGA…VLVL), 111–131 (LGMG…LKQW), 136–156 (GLII…YFSG), 174–194 (WEGV…VGLY), 199–219 (LGAL…SIVG), and 251–271 (SLTA…WGAP).

This sequence belongs to the CDS family.

Its subcellular location is the cell inner membrane. It catalyses the reaction a 1,2-diacyl-sn-glycero-3-phosphate + CTP + H(+) = a CDP-1,2-diacyl-sn-glycerol + diphosphate. Its pathway is phospholipid metabolism; CDP-diacylglycerol biosynthesis; CDP-diacylglycerol from sn-glycerol 3-phosphate: step 3/3. The chain is Phosphatidate cytidylyltransferase (cdsA) from Pseudomonas aeruginosa (strain ATCC 15692 / DSM 22644 / CIP 104116 / JCM 14847 / LMG 12228 / 1C / PRS 101 / PAO1).